A 218-amino-acid polypeptide reads, in one-letter code: Adenylate kinase (218 aa).

10–15 (GAGKGT) contributes to the ATP binding site. The NMP stretch occupies residues 30–59 (STGDMLRAAVKQGTPLGQEAKKVMDAGGLV). Residues Thr31, Arg36, 57–59 (GLV), 85–88 (GFPR), and Gln92 contribute to the AMP site. The segment at 122 to 159 (GRRVHPASGRSYHVRFNPPKQEGLDDVTGEPLVQRDDD) is LID. Residues Arg123 and 132–133 (SY) each bind ATP. AMP-binding residues include Arg156 and Arg167. Gly203 provides a ligand contact to ATP.

This sequence belongs to the adenylate kinase family. Monomer.

Its subcellular location is the cytoplasm. The enzyme catalyses AMP + ATP = 2 ADP. The protein operates within purine metabolism; AMP biosynthesis via salvage pathway; AMP from ADP: step 1/1. Catalyzes the reversible transfer of the terminal phosphate group between ATP and AMP. Plays an important role in cellular energy homeostasis and in adenine nucleotide metabolism. This is Adenylate kinase from Bordetella petrii (strain ATCC BAA-461 / DSM 12804 / CCUG 43448).